An 875-amino-acid chain; its full sequence is Valine--tRNA ligase (875 aa).

Residues 45-55 (PNVTGVLHMGH) carry the 'HIGH' region motif. The 'KMSKS' region signature appears at 524–528 (KMSKS). Lys527 provides a ligand contact to ATP. Residues 803–837 (VKLLIDKTKELIRLEKQLEKYKMLKISVSKKLENE) are a coiled coil.

This sequence belongs to the class-I aminoacyl-tRNA synthetase family. ValS type 1 subfamily. In terms of assembly, monomer.

The protein localises to the cytoplasm. It catalyses the reaction tRNA(Val) + L-valine + ATP = L-valyl-tRNA(Val) + AMP + diphosphate. Catalyzes the attachment of valine to tRNA(Val). As ValRS can inadvertently accommodate and process structurally similar amino acids such as threonine, to avoid such errors, it has a 'posttransfer' editing activity that hydrolyzes mischarged Thr-tRNA(Val) in a tRNA-dependent manner. The sequence is that of Valine--tRNA ligase from Borrelia garinii subsp. bavariensis (strain ATCC BAA-2496 / DSM 23469 / PBi) (Borreliella bavariensis).